The sequence spans 310 residues: Probable L,D-transpeptidase ErfK/SrfK (310 aa).

A signal peptide spans 1–21 (MRRVNILCSFALLFASHTSLA). The L,D-TPase catalytic domain maps to 96 to 231 (KGIVVNVAEM…VPVGTRVQII (136 aa)). The Proton donor/acceptor role is filled by His191. Cys207 serves as the catalytic Nucleophile.

It belongs to the YkuD family. In terms of assembly, interacts with DsbG.

It localises to the periplasm. It participates in cell wall biogenesis; peptidoglycan biosynthesis. Responsible, at least in part, for anchoring of the major outer membrane lipoprotein (Lpp, also known as the Braun lipoprotein) to the peptidoglycan via a meso-diaminopimelyl-L-Lys- bond on the terminal residue of Lpp. The protein is Probable L,D-transpeptidase ErfK/SrfK (erfK) of Escherichia coli (strain K12).